The primary structure comprises 454 residues: Bifunctional protein GlmU (454 aa).

The pyrophosphorylase stretch occupies residues 1 to 231; it reads MSRPTVSLIV…EAETLGVNTR (231 aa). UDP-N-acetyl-alpha-D-glucosamine is bound by residues 11–14, Lys25, Gln78, 83–84, 106–108, Gly143, Glu157, Asn172, and Asn229; these read LAAG, GT, and YGD. Asp108 contacts Mg(2+). A Mg(2+)-binding site is contributed by Asn229. Residues 232 to 252 form a linker region; that stretch reads AQLAAAEAEFQRRARAAALED. The interval 253–454 is N-acetyltransferase; the sequence is GVTLTAPDTV…ARDASKKGTN (202 aa). 2 residues coordinate UDP-N-acetyl-alpha-D-glucosamine: Arg318 and Lys336. The active-site Proton acceptor is His348. UDP-N-acetyl-alpha-D-glucosamine is bound by residues Tyr351 and Asn362. Acetyl-CoA is bound by residues Ala365, 371-372, Ser390, Ser408, and Arg425; that span reads NY.

This sequence in the N-terminal section; belongs to the N-acetylglucosamine-1-phosphate uridyltransferase family. In the C-terminal section; belongs to the transferase hexapeptide repeat family. Homotrimer. Requires Mg(2+) as cofactor.

It localises to the cytoplasm. It carries out the reaction alpha-D-glucosamine 1-phosphate + acetyl-CoA = N-acetyl-alpha-D-glucosamine 1-phosphate + CoA + H(+). The catalysed reaction is N-acetyl-alpha-D-glucosamine 1-phosphate + UTP + H(+) = UDP-N-acetyl-alpha-D-glucosamine + diphosphate. Its pathway is nucleotide-sugar biosynthesis; UDP-N-acetyl-alpha-D-glucosamine biosynthesis; N-acetyl-alpha-D-glucosamine 1-phosphate from alpha-D-glucosamine 6-phosphate (route II): step 2/2. It participates in nucleotide-sugar biosynthesis; UDP-N-acetyl-alpha-D-glucosamine biosynthesis; UDP-N-acetyl-alpha-D-glucosamine from N-acetyl-alpha-D-glucosamine 1-phosphate: step 1/1. The protein operates within bacterial outer membrane biogenesis; LPS lipid A biosynthesis. Functionally, catalyzes the last two sequential reactions in the de novo biosynthetic pathway for UDP-N-acetylglucosamine (UDP-GlcNAc). The C-terminal domain catalyzes the transfer of acetyl group from acetyl coenzyme A to glucosamine-1-phosphate (GlcN-1-P) to produce N-acetylglucosamine-1-phosphate (GlcNAc-1-P), which is converted into UDP-GlcNAc by the transfer of uridine 5-monophosphate (from uridine 5-triphosphate), a reaction catalyzed by the N-terminal domain. This chain is Bifunctional protein GlmU, found in Cereibacter sphaeroides (strain ATCC 17025 / ATH 2.4.3) (Rhodobacter sphaeroides).